The primary structure comprises 110 residues: UPF0060 membrane protein BPSL1340 (110 aa).

The next 4 membrane-spanning stretches (helical) occupy residues 9–29, 34–54, 64–84, and 86–106; these read ALFVLTAVAEIVGCYLPWLVL, PAWLLAPAALSLALFAWLLTL, AAYGGVYIAVALAWLRIVDGV, and LSRWDVAGAALALAGMSVIAL.

This sequence belongs to the UPF0060 family.

It localises to the cell inner membrane. This Burkholderia pseudomallei (strain K96243) protein is UPF0060 membrane protein BPSL1340.